The primary structure comprises 313 residues: MAALTDLSFMYRWFKNCNLVGNLSEKYVFITGCDSGFGNLLAKQLVDRGMQVLAACFTEEGSQKLQRDTSYRLQTTLLDVTKSESIKAAAQWVRDKVGEQGLWALVNNAGVGLPSGPNEWLTKDDFVKVINVNLVGLIEVTLHMLPMVKRARGRVVNMSSSGGRVAVIGGGYCVSKFGVEAFSDSIRRELYYFGVKVCIIEPGNYRTAILGKENLESRMRKLWERLPQETRDSYGEDYFRIYTDKLKNIMQVAEPRVRDVINSMEHAIVSRSPRIRYNPGLDAKLLYIPLAKLPTPVTDFILSRYLPRPADSV.

F29–L53 is a binding site for NADP(+). A substrate-binding site is contributed by S160. Y172 functions as the Proton acceptor in the catalytic mechanism. Residue S185 is modified to Phosphoserine.

It belongs to the short-chain dehydrogenases/reductases (SDR) family. In terms of tissue distribution, expressed in the skin. Expressed in granular and cornified layers of the epidermis (at protein level). Highly expressed in liver.

Its subcellular location is the cytoplasm. The enzyme catalyses a N-[omega-(9R,10R)-epoxy-(13R)-hydroxy-(11E)-octadecenoyloxy]acyl-beta-D-glucosyl-(1&lt;-&gt;1)-sphing-4E-enine + NAD(+) = a N-[omega-(9R,10R)-epoxy-13-oxo-(11E)-octadecenoyloxy]acyl-beta-D-glucosyl-(1&lt;-&gt;1)-sphing-4E-enine + NADH + H(+). It catalyses the reaction a N-[omega-(9R,10R)-epoxy-(13R)-hydroxy-(11E)-octadecenoyloxy]-acylsphing-4E-enine + NAD(+) = a N-[omega-(9R,10R)-epoxy-13-oxo-(11E)-octadecenoyloxy]-acylsphing-4E-enine + NADH + H(+). Its function is as follows. Plays a crucial role in the formation of the epidermal permeability barrier. Catalyzes the NAD+-dependent dehydrogenation of the linoleate 9,10-trans-epoxy-11E-13-alcohol esterified in omega-O-acylceramides (such as in N-[omega-(9R,10R)-epoxy-(13R)-hydroxy-(11E)-octadecenoyloxy]-acylsphing-4E-enine) to the corresponding 13-ketone, the reactive moiety required for binding of epidermal ceramides to proteins. Displays weak conversion of all-trans-retinal to all-trans-retinol in the presence of NADH. Has apparently no steroid dehydrogenase activity. This is Short-chain dehydrogenase/reductase family 9C member 7 (SDR9C7) from Homo sapiens (Human).